Reading from the N-terminus, the 764-residue chain is 5-methyltetrahydropteroyltriglutamate--homocysteine methyltransferase (764 aa).

5-methyltetrahydropteroyltri-L-glutamate contacts are provided by residues 16-19 (RELK) and K121. L-homocysteine contacts are provided by residues 440 to 442 (IGS) and E493. Residues 440 to 442 (IGS) and E493 contribute to the L-methionine site. Residues 524 to 525 (RC) and W570 each bind 5-methyltetrahydropteroyltri-L-glutamate. D608 provides a ligand contact to L-homocysteine. D608 provides a ligand contact to L-methionine. E614 lines the 5-methyltetrahydropteroyltri-L-glutamate pocket. Zn(2+) is bound by residues H650, C652, and E674. H703 serves as the catalytic Proton donor. C735 is a Zn(2+) binding site.

It belongs to the vitamin-B12 independent methionine synthase family. Zn(2+) serves as cofactor.

It catalyses the reaction 5-methyltetrahydropteroyltri-L-glutamate + L-homocysteine = tetrahydropteroyltri-L-glutamate + L-methionine. Its pathway is amino-acid biosynthesis; L-methionine biosynthesis via de novo pathway; L-methionine from L-homocysteine (MetE route): step 1/1. Functionally, catalyzes the transfer of a methyl group from 5-methyltetrahydrofolate to homocysteine resulting in methionine formation. This is 5-methyltetrahydropteroyltriglutamate--homocysteine methyltransferase from Burkholderia cenocepacia (strain HI2424).